Reading from the N-terminus, the 455-residue chain is tRNA modification GTPase MnmE (455 aa).

R22 contacts (6S)-5-formyl-5,6,7,8-tetrahydrofolate. The interval 43–67 (RRATRAALRSPPSGPGPTGPGPEEG) is disordered. The (6S)-5-formyl-5,6,7,8-tetrahydrofolate site is built by E92 and R132. The 154-residue stretch at 228–381 (GLQVAVVGAP…LEAALESRAR (154 aa)) folds into the TrmE-type G domain. N238 serves as a coordination point for K(+). Residues 238-243 (NVGKSS), 257-263 (SDIAGTT), and 282-285 (DTAG) contribute to the GTP site. Mg(2+) is bound at residue S242. The K(+) site is built by S257, I259, and T262. T263 serves as a coordination point for Mg(2+). K455 contacts (6S)-5-formyl-5,6,7,8-tetrahydrofolate.

Belongs to the TRAFAC class TrmE-Era-EngA-EngB-Septin-like GTPase superfamily. TrmE GTPase family. Homodimer. Heterotetramer of two MnmE and two MnmG subunits. The cofactor is K(+).

It is found in the cytoplasm. Functionally, exhibits a very high intrinsic GTPase hydrolysis rate. Involved in the addition of a carboxymethylaminomethyl (cmnm) group at the wobble position (U34) of certain tRNAs, forming tRNA-cmnm(5)s(2)U34. This Rhodospirillum rubrum (strain ATCC 11170 / ATH 1.1.1 / DSM 467 / LMG 4362 / NCIMB 8255 / S1) protein is tRNA modification GTPase MnmE.